Reading from the N-terminus, the 66-residue chain is Movement protein TGBp3 (66 aa).

The Lumenal segment spans residues M1–D2. Residues F3 to I23 traverse the membrane as a helical segment. At N24–N66 the chain is on the cytoplasmic side.

The protein belongs to the Tymovirales TGBp3 protein family.

It is found in the host endoplasmic reticulum membrane. Plays a role in viral cell-to-cell propagation, by facilitating genome transport to neighboring plant cells through plasmosdesmata. May induce the formation of granular vesicles derived from the Endoplasmic reticulum, which align on actin filaments. The protein is Movement protein TGBp3 of Trifolium (WCMV).